A 274-amino-acid chain; its full sequence is Non-homologous end joining protein Ku (274 aa).

Residues 11-195 (ITFGLVNVPV…KYKITPKELS (185 aa)) form the Ku domain.

The protein belongs to the prokaryotic Ku family. In terms of assembly, homodimer. Interacts with LigD.

In terms of biological role, with LigD forms a non-homologous end joining (NHEJ) DNA repair enzyme, which repairs dsDNA breaks with reduced fidelity. Binds linear dsDNA with 5'- and 3'- overhangs but not closed circular dsDNA nor ssDNA. Recruits and stimulates the ligase activity of LigD. The protein is Non-homologous end joining protein Ku of Coxiella burnetii (strain RSA 331 / Henzerling II).